Here is a 341-residue protein sequence, read N- to C-terminus: D-aspartate oxidase (341 aa).

FAD contacts are provided by D36, K37, T43, S44, M50, G307, I311, and S312. The short motif at 339–341 is the Microbody targeting signal element; it reads SNL.

It belongs to the DAMOX/DASOX family. In terms of assembly, monomer. Interacts with PEX5; the interaction is direct and required for localization of DDO to the peroxisome. Interacts with DAOA; the interaction is direct and increases the degradation rate of DDO. Requires FAD as cofactor. In terms of processing, may be S-nitrosylated. Expressed in epithelial cells of the proximal nephron tubules in the renal cortex (at protein level). In the brain, expressed in the frontal, temporal, and occipital lobes of the cortex, hippocampus, striatum, diencephalon, brainstem, cerebellum, spinal cord, plexus choroiderus and ependyma (at protein level). Expression is increased in the prefrontal cortex of schizophrenic patients. Levels are normal in the superior frontal gyrus of patients with Alzheimer's disease.

Its subcellular location is the peroxisome matrix. The protein localises to the cytoplasm. The protein resides in the cytosol. It carries out the reaction D-aspartate + O2 + H2O = oxaloacetate + H2O2 + NH4(+). The enzyme catalyses D-glutamate + O2 + H2O = H2O2 + 2-oxoglutarate + NH4(+). With respect to regulation, inhibited by the benzodiazepine olanzapine. Inhibited by aminooxyacetic acid, thiolactomycin, malonate and meso-tartrate. Clozapine, haloperidol and chlorpromazine have no effect on activity. Not inhibited by sodium, potassium, magnesium, iron, calcium, cobalt, copper, nickel, manganese or zinc ions. Not inhibited by AMP, ADP, ATP, or cAMP. Not inhibited by pyridoxal 5'-phosphate. Selectively catalyzes the oxidative deamination of acidic amino acids. Suppresses the level of D-aspartate in the brain, an amino acid that can act as an agonist for glutamate receptors. Protects the organism from the toxicity of D-amino acids. May also function in the intestine. In Homo sapiens (Human), this protein is D-aspartate oxidase (DDO).